Consider the following 39-residue polypeptide: MTIDRTYPIFTVRWLAVHGLAVPTVFFLGSISAMQFIQR.

A helical transmembrane segment spans residues 14 to 30 (WLAVHGLAVPTVFFLGS). Residue H18 participates in heme binding.

This sequence belongs to the PsbE/PsbF family. In terms of assembly, heterodimer of an alpha subunit and a beta subunit. PSII is composed of 1 copy each of membrane proteins PsbA, PsbB, PsbC, PsbD, PsbE, PsbF, PsbH, PsbI, PsbJ, PsbK, PsbL, PsbM, PsbT, PsbX, PsbY, PsbZ, Psb30/Ycf12, at least 3 peripheral proteins of the oxygen-evolving complex and a large number of cofactors. It forms dimeric complexes. Requires heme b as cofactor.

The protein resides in the plastid. Its subcellular location is the chloroplast thylakoid membrane. Functionally, this b-type cytochrome is tightly associated with the reaction center of photosystem II (PSII). PSII is a light-driven water:plastoquinone oxidoreductase that uses light energy to abstract electrons from H(2)O, generating O(2) and a proton gradient subsequently used for ATP formation. It consists of a core antenna complex that captures photons, and an electron transfer chain that converts photonic excitation into a charge separation. The protein is Cytochrome b559 subunit beta of Nicotiana glutinosa (Tobacco).